The primary structure comprises 125 residues: Small ribosomal subunit protein uS13 (125 aa).

Positions 92–125 are disordered; it reads RRSLPARGQNTQTNARTRKGRRKTVAGKKKAVKK. Over residues 107-125 the composition is skewed to basic residues; sequence RTRKGRRKTVAGKKKAVKK.

This sequence belongs to the universal ribosomal protein uS13 family. Part of the 30S ribosomal subunit. Forms a loose heterodimer with protein S19. Forms two bridges to the 50S subunit in the 70S ribosome.

Its function is as follows. Located at the top of the head of the 30S subunit, it contacts several helices of the 16S rRNA. In the 70S ribosome it contacts the 23S rRNA (bridge B1a) and protein L5 of the 50S subunit (bridge B1b), connecting the 2 subunits; these bridges are implicated in subunit movement. Contacts the tRNAs in the A and P-sites. This is Small ribosomal subunit protein uS13 from Chlorobium phaeobacteroides (strain BS1).